The chain runs to 73 residues: DNA-directed RNA polymerase subunit Rpo10 (73 aa).

Zn(2+) contacts are provided by Cys7, Cys10, Cys44, and Cys45.

Belongs to the archaeal Rpo10/eukaryotic RPB10 RNA polymerase subunit family. Part of the RNA polymerase complex. Forms an Rpo3-Rpo10-Rpo11-Rpo12 complex upon coexpression. Requires Zn(2+) as cofactor.

The protein localises to the cytoplasm. The enzyme catalyses RNA(n) + a ribonucleoside 5'-triphosphate = RNA(n+1) + diphosphate. Functionally, DNA-dependent RNA polymerase (RNAP) catalyzes the transcription of DNA into RNA using the four ribonucleoside triphosphates as substrates. The chain is DNA-directed RNA polymerase subunit Rpo10 from Methanocaldococcus jannaschii (strain ATCC 43067 / DSM 2661 / JAL-1 / JCM 10045 / NBRC 100440) (Methanococcus jannaschii).